Consider the following 1187-residue polypeptide: Tyrosine-protein phosphatase non-receptor type 14 (1187 aa).

The FERM domain occupies Phe-21 to Lys-306. Phosphoserine is present on residues Ser-314, Ser-461, and Ser-486. Polar residues predominate over residues Leu-510–Val-524. The tract at residues Leu-510–Ser-531 is disordered. Ser-591, Ser-593, Ser-594, and Ser-642 each carry phosphoserine. Disordered regions lie at residues Leu-671 to Pro-690 and Lys-787 to Pro-824. Residues Ser-815–Pro-824 are compositionally biased toward basic and acidic residues. Position 831 is a phosphoserine (Ser-831). The region spanning Val-909–Phe-1180 is the Tyrosine-protein phosphatase domain. Residues Asp-1079, Cys-1121 to Arg-1127, and Gln-1165 contribute to the substrate site. Cys-1121 functions as the Phosphocysteine intermediate in the catalytic mechanism.

The protein belongs to the protein-tyrosine phosphatase family. Non-receptor class subfamily. As to quaternary structure, interacts with FLT4; the interaction is enhanced by stimulation with VEGFC. Interacts (via PPxY motifs) with YAP1 (via WW domains); this interaction leads to the cytoplasmic sequestration of YAP1 and inhibits its transcriptional co-activator activity. In terms of processing, ubiquitinated by the ECS (Elongin BC-CUL2/5-SOCS-box protein)/LRR1 E3 ligase complex and subsequently targeted to proteasomal degradation. In terms of tissue distribution, ubiquitous.

It is found in the cytoplasm. The protein resides in the cytoskeleton. The protein localises to the nucleus. It catalyses the reaction O-phospho-L-tyrosyl-[protein] + H2O = L-tyrosyl-[protein] + phosphate. In terms of biological role, protein tyrosine phosphatase which may play a role in the regulation of lymphangiogenesis, cell-cell adhesion, cell-matrix adhesion, cell migration, cell growth and also regulates TGF-beta gene expression, thereby modulating epithelial-mesenchymal transition. Mediates beta-catenin dephosphorylation at adhesion junctions. Acts as a negative regulator of the oncogenic property of YAP, a downstream target of the hippo pathway, in a cell density-dependent manner. May function as a tumor suppressor. This Homo sapiens (Human) protein is Tyrosine-protein phosphatase non-receptor type 14 (PTPN14).